We begin with the raw amino-acid sequence, 208 residues long: Uracil phosphoribosyltransferase (208 aa).

Residues Arg-78, Arg-103, and 130–138 (DPMLATGGT) each bind 5-phospho-alpha-D-ribose 1-diphosphate. Uracil is bound by residues Ile-193 and 198–200 (GDA). Position 199 (Asp-199) interacts with 5-phospho-alpha-D-ribose 1-diphosphate.

It belongs to the UPRTase family. Mg(2+) serves as cofactor.

It catalyses the reaction UMP + diphosphate = 5-phospho-alpha-D-ribose 1-diphosphate + uracil. It functions in the pathway pyrimidine metabolism; UMP biosynthesis via salvage pathway; UMP from uracil: step 1/1. Its activity is regulated as follows. Allosterically activated by GTP. Its function is as follows. Catalyzes the conversion of uracil and 5-phospho-alpha-D-ribose 1-diphosphate (PRPP) to UMP and diphosphate. This is Uracil phosphoribosyltransferase from Nitratidesulfovibrio vulgaris (strain ATCC 29579 / DSM 644 / CCUG 34227 / NCIMB 8303 / VKM B-1760 / Hildenborough) (Desulfovibrio vulgaris).